Consider the following 1418-residue polypeptide: Chromatin remodeling factor mit1 (1418 aa).

The segment covering 135-148 has biased composition (low complexity); the sequence is DETASDSATSSSSD. Residues 135 to 156 are disordered; sequence DETASDSATSSSSDTNKKVNRK. The PHD-type zinc finger occupies 212–271; it reads VCVCVKCHGREHRSSGKNFVYCDHCSNVYHYDCSPLPSLNKETRNYSQQNGFICPLCSKN. An RING-type; atypical zinc finger spans residues 215 to 269; sequence CVKCHGREHRSSGKNFVYCDHCSNVYHYDCSPLPSLNKETRNYSQQNGFICPLCS. One can recognise a Helicase ATP-binding domain in the interval 568-738; the sequence is YLRWYTHHPC…FNLLQFLNPM (171 aa). An ATP-binding site is contributed by 581 to 588; it reads DEMGLGKT. Residues 875-1034 form the Helicase C-terminal domain; that stretch reads ILRLLVPKLI…QNHNSEKDLE (160 aa).

Belongs to the SNF2/RAD54 helicase family. As to quaternary structure, interacts with clr3.

The protein resides in the nucleus. Its subcellular location is the chromosome. The protein localises to the centromere. It localises to the telomere. Its function is as follows. Required for proper positioning of nucleosomes at heterochromatic loci and for transcriptional gene silencing (TGS) function of the Snf2/Hdac-containing repressor complex (SHREC). In Schizosaccharomyces pombe (strain 972 / ATCC 24843) (Fission yeast), this protein is Chromatin remodeling factor mit1 (mit1).